The following is a 514-amino-acid chain: Transmembrane protein 117 (514 aa).

Residues 1 to 15 (MGKDFRYYFQHPWSR) are Cytoplasmic-facing. A helical membrane pass occupies residues 16-36 (MIVAYLVIFFNFLIFAEDPVS). At 37–65 (HSQTEANVIVVGNCFSFVTNKYPRGVGWR) the chain is on the extracellular side. A helical membrane pass occupies residues 66 to 86 (ILKVLLWLLAILIGLIAGKFL). Residues 87–110 (FHQRLFGQLLRLKMFREDHGSWMT) lie on the Cytoplasmic side of the membrane. A helical membrane pass occupies residues 111–131 (MFFSTILFLFIFSHIYNTILL). Residues 132-154 (MDGNMGAYLITDYMGIRNESFMK) lie on the Extracellular side of the membrane. A helical transmembrane segment spans residues 155 to 175 (LAAVGTWMGDFVTAWMVTDMM). The Cytoplasmic portion of the chain corresponds to 176 to 198 (LQDKPYPDWGKSARAFWKKGNVR). The chain crosses the membrane as a helical span at residues 199–219 (IILFWTVLFTLTSVVVLVITT). Topologically, residues 220-239 (DWISWDKLNRGFLPSDEVSR) are extracellular. Residues 240-260 (AFLASFILVFDLLIVMQDWEF) form a helical membrane-spanning segment. Over 261–295 (PHFMGDVDVNLPGLHTPHMQFKIPFFQKIFKEEYR) the chain is Cytoplasmic. A helical transmembrane segment spans residues 296–316 (IHITGKWFNYGIIFLVLILDL). Residues 317–394 (NMWKNQIFYK…FIGASLDVKC (78 aa)) lie on the Extracellular side of the membrane. N-linked (GlcNAc...) asparagine glycans are attached at residues asparagine 353 and asparagine 371. The helical transmembrane segment at 395-415 (LAFVPSLIAFVWFGFFIWFFG) threads the bilayer. Over 416-514 (RFLKNEQGME…PAASQRMRTN (99 aa)) the chain is Cytoplasmic. The disordered stretch occupies residues 430–450 (TYTRMKRKSPSEHSKDMGITR). Basic and acidic residues predominate over residues 438-448 (SPSEHSKDMGI). Threonine 453 is modified (phosphothreonine). The tract at residues 494–514 (ESTSEVEAEQEPAASQRMRTN) is disordered.

The protein belongs to the TMEM117 family.

It localises to the cell membrane. Involved in endoplasmic reticulum (ER) stress-induced cell death pathway. The sequence is that of Transmembrane protein 117 (Tmem117) from Mus musculus (Mouse).